A 722-amino-acid chain; its full sequence is MNVNKKQESIPVNTGSESISSNDNERFEQGKGVGSNLGSHFFEPVEYYYSDGKPMNQTEASQMKGTFSRDFSLNEMNNEFITDSFFCTTTPDPKTESPSFVKYNAHCDDHPEISGHVSSNDKDFAYFEDKSENQPLVTLPNENNQVIEPLSSQSCKSQLSTQNYSESDFGWNQLCDLDPIFKSLAFTDDTNLFPAFADSEAALIMLKKREMTRVKHRAGRPRKYSYVNKDLNFEEGLPRRRGRPTGWRKYPEKEEIYPTLSPRIKKPRKVFDAVVIPVTIKPSIYTEPSLPHHIDWNNGCSEEFDFEPSREDEDFPDLTSDSTGQDPLSSEPTIFDISPLPSDMEPTFSENSLITINKMAIEERKQSRRLEQPLAESQHQEDLLNPYGVDQDFDETCINESEQQATHIPNSSIKFNYDYTPPKSATSHKHKRVDLLASRKENVWTGLYGKVQTEMVSNRGEAVLNENNSKNRTNVTKPNSYKNSVLSIGNNHSNHSNIIKPNTYKNTILSNENNTPNYSNVCLSTSLINRSLPSLKSTMHPGVNKDLITRPFKNVNKMSVRKALIKPFHPPISKISRTRLTVSSPERLYCAKPISMATAPSETDSKLINRIRNLELEIGGLKEQLSVVELALDTDKNSKQIQVVERKIQNWRKSAQLAVEVLFPVFSLKFTTMLQEVPQSVLRTSANDLRTKPCSIGTYLEQLQIPFHLLQYNSETESWDLE.

2 disordered regions span residues 1-35 and 301-342; these read MNVN…GVGS and SEEF…PLPS. The segment covering 9-22 has biased composition (polar residues); it reads SIPVNTGSESISSN. A compositionally biased stretch (acidic residues) spans 302-316; it reads EEFDFEPSREDEDFP. A compositionally biased stretch (polar residues) spans 319 to 332; that stretch reads TSDSTGQDPLSSEP.

As to quaternary structure, interacts with swi5 and rhp51.

In terms of biological role, required for normal mating-type switching. The chain is Mating-type switching protein swi2 (swi2) from Schizosaccharomyces pombe (strain 972 / ATCC 24843) (Fission yeast).